Consider the following 588-residue polypeptide: MIGRTHMNGTVTEETIGQAVQLKGWVQKRRDLGGLIFLDLRDRTGIVQVVFQPENEQAHRLAESIRSEYVLDIKGTVVQRENPNPNIPTGQVEVVADEVIILNASKMTPFPISEEAEQTSEDLRLKYRYLDLRRPSLQETFRLRSKASNIMRNFLDEQDFLEVETPILTKSTPEGARDYLVPSRVHPGEFYALPQSPQLFKQLLMVSGFERYFQIARCFRDEDLRADRQPEFTQVDIETSFMDVEDLYAMMESMMTRVMKETLGKDITTPFPRMPYAEAMSRFGSDKPDTRFGLELIDVAEAVTGAGFKVFDMALESGGEVKALNVKGAADQFSRKDIDKLQEFTAIYGAKGLAWVKVTADGLNGPIAKFFDEAATARLVEATTAEAGDLLVFVAAKASIVADSLGALRQKLGKELGLIDETVFNFLWVTDFPLVTFEEADSRFYANHHPFTMPRREDLDKLETDPGSVLAVAYDLVLNGYELGGGSQRIYERDIQERMFKLLGFTEEEANEQFGFLMEAFEYGTPPHAGIALGLDRLIMLLAGRTNLRDTIAFPKTASASDLLTAAPSPVSDAQLNELSIRTAVKQS.

Glu-174 lines the L-aspartate pocket. The aspartate stretch occupies residues 198-201; the sequence is QLFK. Arg-220 lines the L-aspartate pocket. Residues 220–222 and Gln-229 contribute to the ATP site; that span reads RDE. His-448 contacts L-aspartate. Glu-482 is a binding site for ATP. L-aspartate is bound at residue Arg-489. Position 534-537 (534-537) interacts with ATP; it reads GLDR.

This sequence belongs to the class-II aminoacyl-tRNA synthetase family. Type 1 subfamily. Homodimer.

The protein localises to the cytoplasm. It catalyses the reaction tRNA(Asp) + L-aspartate + ATP = L-aspartyl-tRNA(Asp) + AMP + diphosphate. Functionally, catalyzes the attachment of L-aspartate to tRNA(Asp) in a two-step reaction: L-aspartate is first activated by ATP to form Asp-AMP and then transferred to the acceptor end of tRNA(Asp). In Exiguobacterium sibiricum (strain DSM 17290 / CCUG 55495 / CIP 109462 / JCM 13490 / 255-15), this protein is Aspartate--tRNA ligase.